A 158-amino-acid chain; its full sequence is Large ribosomal subunit protein uL11 (158 aa).

The protein belongs to the universal ribosomal protein uL11 family. As to quaternary structure, part of the ribosomal stalk of the 50S ribosomal subunit. Interacts with L10 and the large rRNA to form the base of the stalk. L10 forms an elongated spine to which L12 dimers bind in a sequential fashion forming a multimeric L10(L12)X complex.

Functionally, forms part of the ribosomal stalk which helps the ribosome interact with GTP-bound translation factors. In Methanoregula boonei (strain DSM 21154 / JCM 14090 / 6A8), this protein is Large ribosomal subunit protein uL11.